We begin with the raw amino-acid sequence, 235 residues long: 2-C-methyl-D-erythritol 4-phosphate cytidylyltransferase (235 aa).

It belongs to the IspD/TarI cytidylyltransferase family. IspD subfamily.

The enzyme catalyses 2-C-methyl-D-erythritol 4-phosphate + CTP + H(+) = 4-CDP-2-C-methyl-D-erythritol + diphosphate. Its pathway is isoprenoid biosynthesis; isopentenyl diphosphate biosynthesis via DXP pathway; isopentenyl diphosphate from 1-deoxy-D-xylulose 5-phosphate: step 2/6. Functionally, catalyzes the formation of 4-diphosphocytidyl-2-C-methyl-D-erythritol from CTP and 2-C-methyl-D-erythritol 4-phosphate (MEP). The chain is 2-C-methyl-D-erythritol 4-phosphate cytidylyltransferase from Ectopseudomonas mendocina (strain ymp) (Pseudomonas mendocina).